Consider the following 389-residue polypeptide: bZIP transcription factor 68 (389 aa).

Over residues methionine 1–lysine 16 the composition is skewed to basic and acidic residues. Disordered regions lie at residues methionine 1–glycine 42, methionine 124–lysine 154, alanine 170–valine 236, glutamine 285–alanine 318, and serine 356–alanine 389. The segment covering proline 19–serine 32 has biased composition (low complexity). A compositionally biased stretch (basic and acidic residues) spans glycine 137–proline 149. Residue lysine 154 forms a Glycyl lysine isopeptide (Lys-Gly) (interchain with G-Cter in ubiquitin) linkage. The span at alanine 170 to serine 205 shows a compositional bias: low complexity. 2 stretches are compositionally biased toward basic and acidic residues: residues glycine 206–glutamate 215 and serine 304–alanine 318. The 64-residue stretch at glutamate 295–leucine 358 folds into the bZIP domain. Residues lysine 297–lysine 316 form a basic motif region. The interval leucine 323–leucine 358 is leucine-zipper. Residues serine 356–proline 366 are compositionally biased toward polar residues. The span at aspartate 372 to alanine 389 shows a compositional bias: basic and acidic residues.

The protein belongs to the bZIP family. As to quaternary structure, monomer, homodimer and heterodimers with GBF1/BZIP41, GBF2/BZIP54 and GBF3/BZIP55. Heterodimers with BZIP16. Interacts with GIP1.

The protein localises to the nucleus. In terms of biological role, transcriptional activator that binds to the G-box motif (5'-CACGTG-3') and other cis-acting elements with 5'-ACGT-3' core, such as Hex, C-box and as-1 motifs. Possesses high binding affinity to G-box, much lower affinity to Hex and C-box, and little affinity to as-1 element. G-box and G-box-like motifs are cis-acting elements defined in promoters of certain plant genes which are regulated by such diverse stimuli as light-induction or hormone control. Binds to the G-box motif 5'-CACGTG-3' of LHCB2.4 (At3g27690) promoter. May act as transcriptional activator in light-regulated expression of LHCB2.4. Probably binds DNA as monomer. DNA-binding activity is redox-dependent. This Arabidopsis thaliana (Mouse-ear cress) protein is bZIP transcription factor 68.